The primary structure comprises 976 residues: Peptidylglycine alpha-amidating monooxygenase (976 aa).

The N-terminal stretch at 1–25 is a signal peptide; the sequence is MAGRARSGLLLLLLGLLALQSSCLA. The segment at 1 to 497 is peptidylglycine alpha-hydroxylating monooxygenase; sequence MAGRARSGLL…EGPWEPEPSG (497 aa). The propeptide occupies 26-35; sequence FRSPLSVFKR. The Intragranular portion of the chain corresponds to 36–866; sequence FKETTRSFSN…QKLSTEPGSG (831 aa). 5 disulfide bridges follow: Cys47–Cys186, Cys81–Cys126, Cys114–Cys131, Cys227–Cys334, and Cys293–Cys315. Residues His107 and His108 each contribute to the Cu(2+) site. Cu(2+) contacts are provided by His172, His242, His244, and Met314. Positions 498–820 are peptidyl-alpha-hydroxyglycine alpha-amidating lyase; it reads DFHVEEELDW…LTEKMEHRSV (323 aa). NHL repeat units lie at residues 501 to 544, 570 to 611, 620 to 665, and 673 to 717; these read VEEE…NSFD, AEIL…LDPH, LGRS…FSPS, and GEES…FKTD. Val520 serves as a coordination point for Ca(2+). Arg533 serves as a coordination point for a protein. A Zn(2+)-binding site is contributed by His585. Leu587 serves as a coordination point for Ca(2+). Cysteines 634 and 655 form a disulfide. Tyr654 contacts a protein. Zn(2+) is bound at residue His690. A disulfide bridge links Cys702 with Cys713. A protein is bound at residue Arg706. Asn765 is a glycosylation site (N-linked (GlcNAc...) asparagine). The stretch at 769-812 is one NHL 5 repeat; the sequence is GEIIDVFKPVRKHFDMPHDIVASEDGTVYIGDAHTNTVWKFTLT. Val774 is modified (sulfotyrosine). Residue His786 participates in Zn(2+) binding. Position 787 (Asp787) interacts with Ca(2+). Position 792 is a sulfotyrosine (Glu792). A helical membrane pass occupies residues 867–890; it reads VSVVLITTLLVIPVLVLLAIVMFI. The Cytoplasmic portion of the chain corresponds to 891 to 976; that stretch reads RWKKSRAFGD…APLPKPAPSS (86 aa). 3 positions are modified to phosphoserine: Ser921, Ser932, and Ser945. The interaction with RASSF9 stretch occupies residues 928 to 945; the sequence is NFFASRKGYSRKGFDRVS. The segment at 940–976 is disordered; sequence GFDRVSTEGSDQEKDEDDGTESEEEYSAPLPKPAPSS. A Phosphothreonine modification is found at Thr946. Ser949 carries the phosphoserine modification. Over residues 952-965 the composition is skewed to acidic residues; sequence EKDEDDGTESEEEY. Thr959 is modified (phosphothreonine). Residue Ser961 is modified to Phosphoserine.

The protein in the C-terminal section; belongs to the peptidyl-alpha-hydroxyglycine alpha-amidating lyase family. In the N-terminal section; belongs to the copper type II ascorbate-dependent monooxygenase family. As to quaternary structure, monomer. Interacts with RASSF9. The cofactor is Zn(2+). It depends on Cu(2+) as a cofactor.

It localises to the cytoplasmic vesicle. Its subcellular location is the secretory vesicle membrane. The protein localises to the membrane. The protein resides in the secreted. It catalyses the reaction a [peptide]-C-terminal glycine + 2 L-ascorbate + O2 = a [peptide]-C-terminal (2S)-2-hydroxyglycine + 2 monodehydro-L-ascorbate radical + H2O. The enzyme catalyses a [peptide]-C-terminal (2S)-2-hydroxyglycine = a [peptide]-C-terminal amide + glyoxylate. The catalysed reaction is N-dodecanoylglycine + 2 L-ascorbate + O2 = N-dodecanoyl-(2S)-hydroxyglycine + 2 monodehydro-L-ascorbate radical + H2O. It carries out the reaction N-dodecanoyl-(2S)-hydroxyglycine = dodecanamide + glyoxylate. It catalyses the reaction N-(9Z,12Z,15Z)-octadecatrienoylglycine + 2 L-ascorbate + O2 = N-(9Z,12Z,15Z)-octadecatrienoyl-(2S)-hydroxyglycine + 2 monodehydro-L-ascorbate radical + H2O. The enzyme catalyses N-(9Z,12Z,15Z)-octadecatrienoyl-(2S)-hydroxyglycine = (9Z,12Z,15Z)-octadecatrienamide + glyoxylate. The catalysed reaction is N-(9Z-octadecenoyl)glycine + 2 L-ascorbate + O2 = N-(9Z-octadecenoyl)-(2S)-hydroxyglycine + 2 monodehydro-L-ascorbate radical + H2O. It carries out the reaction N-(9Z-octadecenoyl)-(2S)-hydroxyglycine = (9Z)-octadecenamide + glyoxylate. It catalyses the reaction N-tetradecanoylglycine + 2 L-ascorbate + O2 = N-tetradecanoyl-(2S)-hydroxyglycine + 2 monodehydro-L-ascorbate radical + H2O. The enzyme catalyses N-tetradecanoyl-(2S)-hydroxyglycine = tetradecamide + glyoxylate. The catalysed reaction is N-decanoylglycine + 2 L-ascorbate + O2 = N-decanoyl-(2S)-hydroxyglycine + 2 monodehydro-L-ascorbate radical + H2O. It carries out the reaction N-decanoyl-(2S)-hydroxyglycine = decanamide + glyoxylate. It catalyses the reaction N-octanoylglycine + 2 L-ascorbate + O2 = N-octanoyl-(2S)-hydroxyglycine + 2 monodehydro-L-ascorbate radical + H2O. The enzyme catalyses N-octanoyl-(2S)-hydroxyglycine = octanamide + glyoxylate. Its activity is regulated as follows. PAM activity is inhibited by EDTA, phenylglyoxal and diethyl pyrocarbonate. PAL activity is stimulated by cadmium and inhibited by mercury. Its function is as follows. Bifunctional enzyme that catalyzes amidation of the C-terminus of proteins. Alpha-amidation is present at the C-terminus of many endocrine hormones and neuropeptides and is required for their activity. C-terminal amidation also takes place in response to protein fragmentation triggered by oxidative stress, promoting degradation of amidated protein fragments by the proteasome. Alpha-amidation involves two sequential reactions, both of which are catalyzed by separate catalytic domains of the enzyme. The first step, catalyzed by peptidyl alpha-hydroxylating monooxygenase (PHM) domain, is the copper-, ascorbate-, and O2- dependent stereospecific hydroxylation (with S stereochemistry) at the alpha-carbon (C-alpha) of the C-terminal glycine of the peptidylglycine substrate. The second step, catalyzed by the peptidylglycine amidoglycolate lyase (PAL) domain, is the zinc-dependent cleavage of the N-C-alpha bond, producing the alpha-amidated peptide and glyoxylate. Similarly, catalyzes the two-step conversion of an N-fatty acylglycine to a primary fatty acid amide and glyoxylate. The chain is Peptidylglycine alpha-amidating monooxygenase from Rattus norvegicus (Rat).